We begin with the raw amino-acid sequence, 121 residues long: Small ribosomal subunit protein uS13 (121 aa).

Residues 91–121 form a disordered region; it reads HRMSLPVRGQRTRTNARTRRGSRKTVAGRKK. Residues 100–121 show a composition bias toward basic residues; it reads QRTRTNARTRRGSRKTVAGRKK.

The protein belongs to the universal ribosomal protein uS13 family. In terms of assembly, part of the 30S ribosomal subunit. Forms a loose heterodimer with protein S19. Forms two bridges to the 50S subunit in the 70S ribosome.

Its function is as follows. Located at the top of the head of the 30S subunit, it contacts several helices of the 16S rRNA. In the 70S ribosome it contacts the 23S rRNA (bridge B1a) and protein L5 of the 50S subunit (bridge B1b), connecting the 2 subunits; these bridges are implicated in subunit movement. Contacts the tRNAs in the A and P-sites. This chain is Small ribosomal subunit protein uS13, found in Prochlorococcus marinus (strain MIT 9211).